A 108-amino-acid polypeptide reads, in one-letter code: DNA-directed RNA polymerase subunit omega (108 aa).

The interval 1 to 32 is disordered; it reads MTNSQSDAALAAVPDRFDPSAGGPGAYDTPLG.

The protein belongs to the RNA polymerase subunit omega family. The RNAP catalytic core consists of 2 alpha, 1 beta, 1 beta' and 1 omega subunit. When a sigma factor is associated with the core the holoenzyme is formed, which can initiate transcription.

It carries out the reaction RNA(n) + a ribonucleoside 5'-triphosphate = RNA(n+1) + diphosphate. In terms of biological role, promotes RNA polymerase assembly. Latches the N- and C-terminal regions of the beta' subunit thereby facilitating its interaction with the beta and alpha subunits. This Mycobacterium avium (strain 104) protein is DNA-directed RNA polymerase subunit omega.